The following is a 1150-amino-acid chain: Solute carrier family 12 member 6 (1150 aa).

The segment at 1–108 (MHPPEATTKM…GEHSQLLDDG (108 aa)) is disordered. Over 1-135 (MHPPEATTKM…DEYFDKNLAL (135 aa)) the chain is Cytoplasmic. Residues 28-45 (LSDTSPDLSSRSSSRVRF) are compositionally biased toward low complexity. Ser32 is subject to Phosphoserine. Positions 80–101 (DRTSNPQDVTEDPSQNSITGEH) are enriched in polar residues. Ser120 carries the post-translational modification Phosphoserine. A discontinuously helical membrane pass occupies residues 136–158 (FEEEMDTRPKVSSLLNRMANYTN). 2 residues coordinate K(+): Ser147 and Ser148. Ser148 is modified (phosphoserine). Residue Asn151 participates in chloride binding. The Extracellular portion of the chain corresponds to 159 to 165 (LTQGAKE). Residues 161-181 (QGAKEHEEAENITEGKKKPTK) form a disordered region. Residues 163–177 (AKEHEEAENITEGKK) show a composition bias toward basic and acidic residues. Residues 166-188 (HEEAENITEGKKKPTKSPQMGTF) form a helical membrane-spanning segment. Topologically, residues 189-211 (MGVYLPCLQNIFGVILFLRLTWV) are cytoplasmic. A helical membrane pass occupies residues 212 to 245 (VGTAGILQAFAIVLICCCCTMLTAISMSAIATNG). The Extracellular portion of the chain corresponds to 246 to 263 (VVPAGGSYFMISRALGPE). Transmembrane regions (helical) follow at residues 264–287 (FGGA…ILGA) and 288–316 (IEIF…AMLN). Residue Tyr283 participates in K(+) binding. The Extracellular portion of the chain corresponds to 317-433 (NMRVYGTAFL…FVHNNVISIQ (117 aa)). A disulfide bridge connects residues Cys375 and Cys390. N-linked (GlcNAc...) asparagine glycans are attached at residues Asn379, Asn398, Asn411, and Asn417. A disulfide bridge connects residues Cys410 and Cys420. A helical transmembrane segment spans residues 434–454 (GIPGLASGIITENLWSNYLPK). 3 residues coordinate K(+): Ile443, Thr444, and Asn446. 2 residues coordinate chloride: Ile443 and Thr444. Positions 447 and 448 each coordinate chloride. At 455–464 (GEIIEKPSAK) the chain is on the cytoplasmic side. The helical transmembrane segment at 465–487 (SSDVLGNLNHEYVLADITTSFTL) threads the bilayer. Residues 488–518 (LVGIFFPSVTGIMAGSNRSGDLKDAQKSIPI) are Extracellular-facing. Residue Thr497 participates in K(+) binding. A helical transmembrane segment spans residues 519–545 (GTILAILTTSFVYLSNVVLFGACIEGV). The Cytoplasmic portion of the chain corresponds to 546–568 (VLRDKFGDAVKGNLVVGTLSWPS). Transmembrane regions (helical) follow at residues 569 to 589 (PWVI…QSLT) and 590 to 612 (GAPR…VFGH). A chloride-binding site is contributed by Ile603. Topologically, residues 613–629 (SKANGEPTWALLLTAAI) are cytoplasmic. The next 2 helical transmembrane spans lie at 630–649 (AELG…LSMF) and 650–665 (FLMC…ALQT). Chloride is bound at residue Tyr654. Residues 666–1150 (LLRTPNWRPR…GGSEVITIYS (485 aa)) are Cytoplasmic-facing. The interval 682 to 691 (ALSFMGMSIC) is scissor helix. The residue at position 736 (Ser736) is a Phosphoserine. Thr778 carries the phosphothreonine modification. Residue Ser981 is modified to Phosphoserine. Phosphothreonine is present on Thr991. Phosphoserine occurs at positions 1023, 1029, and 1032. The residue at position 1048 (Thr1048) is a Phosphothreonine. Tyr1121 carries the phosphotyrosine modification.

This sequence belongs to the SLC12A transporter family. K/Cl co-transporter subfamily. As to quaternary structure, homodimer; adopts a domain-swap conformation at the scissor helices connecting the transmembrane domain and C-terminal domain. Heterodimer with K-Cl cotransporter SLC12A5. Interacts (via C-terminus) with CKB; the interaction may be required for potassium-chloride cotransport activity. Post-translationally, phosphorylated, phosphorylation regulates transporter activity. Phosphorylated at Thr-991 and Thr-1048 by OXSR1/OSR1 and STK39/SPAK downstream of WNK kinases (WNK1, WNK2, WNK3 or WNK4), inhibiting the potassium-chloride cotransport activity. In terms of processing, N-glycosylated. Expressed in hippocampus and corpus callosum (at protein level). Highly expressed throughout the brain and detected at lower levels in kidney. Highly expressed in highly myelinated white matter of the brain, but not in gray matter. Detected in the corpus callosum, in packed cell layers of the hippocampus and in Purkinje neurons within the cerebellum. Highly expressed in white matter in the spinal cord, but not in dorsal root ganglia or sciatic nerve. Colocalizes with the oligodendrocyte marker CNP. Expressed in hippocampus in CA1, and to a lesser extent CA3 pyramidal cells. Also expressed in cortex, mostly in large neurons and in the large cerebellar Purkinje cells. In terms of tissue distribution, highly expressed in kidney, but not detected in brain.

It localises to the cell membrane. Its subcellular location is the basolateral cell membrane. It catalyses the reaction K(+)(in) + chloride(in) = K(+)(out) + chloride(out). With respect to regulation, inhibited following phosphorylation by OXSR1/OSR1 and STK39/SPAK: phosphorylation takes place downstream of WNK kinases (WNK1, WNK2, WNK3 or WNK4) in response to hyperosmotic stress and subsequent cell shrinkage. Its function is as follows. Mediates electroneutral potassium-chloride cotransport when activated by cell swelling. May contribute to cell volume homeostasis in single cells. In terms of biological role, mediates electroneutral potassium-chloride cotransport when activated by cell swelling. May contribute to cell volume homeostasis in single cells. This chain is Solute carrier family 12 member 6 (Slc12a6), found in Mus musculus (Mouse).